Consider the following 396-residue polypeptide: Elongation factor Tu (396 aa).

The tr-type G domain occupies 10-206 (KPHCNIGTIG…AVDEFIPQPT (197 aa)). Residues 19–26 (GHVDHGKT) form a G1 region. 19 to 26 (GHVDHGKT) lines the GTP pocket. Threonine 26 lines the Mg(2+) pocket. Residues 60 to 64 (GITIS) are G2. The interval 81–84 (DCPG) is G3. Residues 81–85 (DCPGH) and 136–139 (NKVD) contribute to the GTP site. The G4 stretch occupies residues 136–139 (NKVD). Residues 174–176 (SAL) form a G5 region.

This sequence belongs to the TRAFAC class translation factor GTPase superfamily. Classic translation factor GTPase family. EF-Tu/EF-1A subfamily. In terms of assembly, monomer.

The protein resides in the cytoplasm. It catalyses the reaction GTP + H2O = GDP + phosphate + H(+). Functionally, GTP hydrolase that promotes the GTP-dependent binding of aminoacyl-tRNA to the A-site of ribosomes during protein biosynthesis. This is Elongation factor Tu from Pelagibacter ubique (strain HTCC1062).